The primary structure comprises 225 residues: Ribosome maturation factor RimM (225 aa).

A PRC barrel domain is found at 144–225 (ADEFYWVDLI…RIVVDWEADY (82 aa)).

It belongs to the RimM family. As to quaternary structure, binds ribosomal protein uS19.

It is found in the cytoplasm. In terms of biological role, an accessory protein needed during the final step in the assembly of 30S ribosomal subunit, possibly for assembly of the head region. Essential for efficient processing of 16S rRNA. May be needed both before and after RbfA during the maturation of 16S rRNA. It has affinity for free ribosomal 30S subunits but not for 70S ribosomes. This Burkholderia orbicola (strain AU 1054) protein is Ribosome maturation factor RimM.